A 614-amino-acid chain; its full sequence is Vitamin B12 transporter BtuB (614 aa).

Residues 1 to 20 form the signal peptide; sequence MIKKASLLTACSVTAFSAWA. Residues 26-33 carry the TonB box motif; that stretch reads DTLVVTAN. The region spanning 38 to 152 is the TBDR plug domain; sequence PRSTVLAPTT…IGGVVNIITT (115 aa). Cyanocob(III)alamin is bound by residues leucine 83, serine 85, asparagine 92, and 110-111; that span reads VS. Residues 155-614 form the TBDR beta-barrel domain; that stretch reads HPGTEISAGW…EYTLSGSYTF (460 aa). 3 beta stranded membrane-spanning segments follow: residues 158–165, 169–178, and 184–195; these read TEISAGWG, YQNYDVSTQQ, and TRVTLLGDYAHT. 4 residues coordinate Ca(2+): aspartate 199, glutamine 211, aspartate 213, and aspartate 215. Beta stranded transmembrane passes span 217 to 227 and 232 to 248; these read FLSKTLYGALE and DVWS…NRTN. 2 residues coordinate Ca(2+): tyrosine 249 and aspartate 250. Alanine 251 is a binding site for cyanocob(III)alamin. Ca(2+) is bound at residue aspartate 261. 14 beta stranded membrane passes run 263 to 277, 279 to 296, 309 to 325, 328 to 337, 353 to 369, 371 to 381, 385 to 400, 403 to 417, 434 to 443, 449 to 458, 473 to 490, 494 to 509, 517 to 529, and 535 to 550; these read RKLY…LRYN, ELIK…KDYN, TLDE…NNII, HGNIGAGVDW, YDQR…QQVG, FTFEGAGRSDD, FGRH…WEFI, YRFI…KAPN, KSKQWEGAFE, VNWRISGYRN, YYNE…TANF, PLTH…ARNA, RRAK…QLDW, and DWGI…YDKD. Threonine 309 provides a ligand contact to cyanocob(III)alamin. Arginine 517 is a cyanocob(III)alamin binding site. Residue tyrosine 551 participates in cyanocob(III)alamin binding. 3 consecutive transmembrane segments (beta stranded) span residues 558-572, 585-596, and 602-614; these read TVKM…LAVA, IANLFDKDYETV, and AGRE…SYTF. The TonB C-terminal box signature appears at 597-614; it reads YGYQTAGREYTLSGSYTF.

Belongs to the TonB-dependent receptor family. BtuB (TC 1.B.14.3.1) subfamily.

It is found in the cell outer membrane. Its function is as follows. Involved in the active translocation of vitamin B12 (cyanocobalamin) across the outer membrane to the periplasmic space. It derives its energy for transport by interacting with the trans-periplasmic membrane protein TonB. This is Vitamin B12 transporter BtuB from Escherichia coli O6:K15:H31 (strain 536 / UPEC).